A 120-amino-acid polypeptide reads, in one-letter code: Large ribosomal subunit protein eL18 (120 aa).

It belongs to the eukaryotic ribosomal protein eL18 family.

The protein is Large ribosomal subunit protein eL18 of Pyrococcus horikoshii (strain ATCC 700860 / DSM 12428 / JCM 9974 / NBRC 100139 / OT-3).